The chain runs to 436 residues: Trigger factor (436 aa).

The PPIase FKBP-type domain occupies 163–248 (TDRVIIDFAG…VKNVAEAILP (86 aa)).

This sequence belongs to the FKBP-type PPIase family. Tig subfamily.

Its subcellular location is the cytoplasm. The enzyme catalyses [protein]-peptidylproline (omega=180) = [protein]-peptidylproline (omega=0). Involved in protein export. Acts as a chaperone by maintaining the newly synthesized protein in an open conformation. Functions as a peptidyl-prolyl cis-trans isomerase. This is Trigger factor from Laribacter hongkongensis (strain HLHK9).